A 941-amino-acid polypeptide reads, in one-letter code: Ankyrin repeat and MYND domain-containing protein 1 (941 aa).

3 MORN repeats span residues 2–24, 25–47, and 70–92; these read YQGE…TGES, YHGQ…DGSS, and FQGL…DGSQ. ANK repeat units follow at residues 292–321, 513–542, 545–574, 581–613, 657–691, 694–723, and 737–766; these read KGYT…DVNK, MRRM…DPNL, VPMQ…RTDI, STLT…DVDA, GGRT…NPNL, SGHS…DPNL, and CDLT…DILK. 8 residues coordinate Zn(2+): Cys-880, Cys-883, Cys-894, Cys-897, Cys-903, Cys-907, His-916, and Cys-920. The MYND-type zinc-finger motif lies at 880-920; sequence CYQCGRSIGVRLLPCPRCYGILTCSKYCKTKAWTEFHKKDC.

The chain is Ankyrin repeat and MYND domain-containing protein 1 (ANKMY1) from Homo sapiens (Human).